The sequence spans 397 residues: Putative 3'(2'),5'-bisphosphate nucleotidase, mitochondrial (397 aa).

The transit peptide at 1-16 (MYILDTGARFSAVRFS) directs the protein to the mitochondrion. The active-site Proton acceptor is D91. Mg(2+) is bound by residues E114, D174, I176, and D177. The active-site Proton acceptor is the T179. Residues T179, S305, K308, and D334 each contribute to the adenosine 3',5'-bisphosphate site. Residues S305, K308, and D334 each coordinate AMP. Position 334 (D334) interacts with Mg(2+).

It belongs to the inositol monophosphatase superfamily. Mg(2+) serves as cofactor.

Its subcellular location is the mitochondrion. It carries out the reaction 3'-phosphoadenylyl sulfate + H2O = adenosine 5'-phosphosulfate + phosphate. The enzyme catalyses adenosine 3',5'-bisphosphate + H2O = AMP + phosphate. The catalysed reaction is adenosine 2',5'-bisphosphate + H2O = AMP + phosphate. Its function is as follows. Phosphatase that converts adenosine 3'-phosphate 5'-phosphosulfate (PAPS) to adenosine 5'-phosphosulfate (APS) and 3'(2')-phosphoadenosine 5'-phosphate (PAP) to AMP. The chain is Putative 3'(2'),5'-bisphosphate nucleotidase, mitochondrial from Arabidopsis thaliana (Mouse-ear cress).